A 214-amino-acid polypeptide reads, in one-letter code: ATP-dependent Clp protease proteolytic subunit (214 aa).

The active-site Nucleophile is Ser-110. The active site involves His-135.

This sequence belongs to the peptidase S14 family. Fourteen ClpP subunits assemble into 2 heptameric rings which stack back to back to give a disk-like structure with a central cavity, resembling the structure of eukaryotic proteasomes.

Its subcellular location is the cytoplasm. It carries out the reaction Hydrolysis of proteins to small peptides in the presence of ATP and magnesium. alpha-casein is the usual test substrate. In the absence of ATP, only oligopeptides shorter than five residues are hydrolyzed (such as succinyl-Leu-Tyr-|-NHMec, and Leu-Tyr-Leu-|-Tyr-Trp, in which cleavage of the -Tyr-|-Leu- and -Tyr-|-Trp bonds also occurs).. Functionally, cleaves peptides in various proteins in a process that requires ATP hydrolysis. Has a chymotrypsin-like activity. Plays a major role in the degradation of misfolded proteins. The sequence is that of ATP-dependent Clp protease proteolytic subunit from Legionella pneumophila (strain Paris).